We begin with the raw amino-acid sequence, 283 residues long: Pantothenate synthetase (283 aa).

Residue 30–37 (MGNLHDGH) coordinates ATP. The active-site Proton donor is the His37. Residue Gln61 participates in (R)-pantoate binding. Position 61 (Gln61) interacts with beta-alanine. ATP is bound at residue 149 to 152 (GEKD). Gln155 contributes to the (R)-pantoate binding site. Position 186 to 189 (186 to 189 (LSSR)) interacts with ATP.

The protein belongs to the pantothenate synthetase family. Homodimer.

It is found in the cytoplasm. It catalyses the reaction (R)-pantoate + beta-alanine + ATP = (R)-pantothenate + AMP + diphosphate + H(+). It participates in cofactor biosynthesis; (R)-pantothenate biosynthesis; (R)-pantothenate from (R)-pantoate and beta-alanine: step 1/1. Functionally, catalyzes the condensation of pantoate with beta-alanine in an ATP-dependent reaction via a pantoyl-adenylate intermediate. This chain is Pantothenate synthetase, found in Shigella sonnei (strain Ss046).